The following is a 343-amino-acid chain: Heat-inducible transcription repressor HrcA (343 aa).

It belongs to the HrcA family.

Its function is as follows. Negative regulator of class I heat shock genes (grpE-dnaK-dnaJ and groELS operons). Prevents heat-shock induction of these operons. The polypeptide is Heat-inducible transcription repressor HrcA (Leptospira biflexa serovar Patoc (strain Patoc 1 / Ames)).